Consider the following 302-residue polypeptide: Monopolin complex subunit MAM1 (302 aa).

Disordered stretches follow at residues 53-83 (YHKEHSVKPKQNSGNVAAKEDKDTQHLQNNV) and 257-276 (TSENPFSSSPNTKKIKSKGK). Residues 257-268 (TSENPFSSSPNT) show a composition bias toward polar residues.

Component of the monopolin complex composed of at least CSM1, LRS4 and MAM1. The complex associates with the kinetochore during late pachytene. In terms of processing, phosphorylated by CDC5. This phosphorylation is required for the location to the kinetochores during late pachytene.

It is found in the nucleus. Its function is as follows. Component of the monopolin complex which promotes monoorientation during meiosis I, required for chromosome segregation during meiosis. In Saccharomyces cerevisiae (strain ATCC 204508 / S288c) (Baker's yeast), this protein is Monopolin complex subunit MAM1 (MAM1).